The sequence spans 308 residues: Tyrosine recombinase XerC (308 aa).

A Core-binding (CB) domain is found at 20 to 101; that stretch reads SKLHTLIDDF…SVKAFSSWAQ (82 aa). The 181-residue stretch at 122–302 folds into the Tyr recombinase domain; that stretch reads DLPKILGEQQ…SNKRLLEAFN (181 aa). Active-site residues include R163, K187, H254, R257, and H280. Y289 acts as the O-(3'-phospho-DNA)-tyrosine intermediate in catalysis.

The protein belongs to the 'phage' integrase family. XerC subfamily. As to quaternary structure, forms a cyclic heterotetrameric complex composed of two molecules of XerC and two molecules of XerD.

It localises to the cytoplasm. Its function is as follows. Site-specific tyrosine recombinase, which acts by catalyzing the cutting and rejoining of the recombining DNA molecules. The XerC-XerD complex is essential to convert dimers of the bacterial chromosome into monomers to permit their segregation at cell division. It also contributes to the segregational stability of plasmids. This Corynebacterium glutamicum (strain ATCC 13032 / DSM 20300 / JCM 1318 / BCRC 11384 / CCUG 27702 / LMG 3730 / NBRC 12168 / NCIMB 10025 / NRRL B-2784 / 534) protein is Tyrosine recombinase XerC.